The following is a 267-amino-acid chain: Trehalose 2-sulfotransferase (267 aa).

Alpha,alpha-trehalose is bound by residues Gln14, Glu33–Gln39, Pro48, and Trp53. The active-site Proton acceptor is the Glu36.

It belongs to the Stf0 sulfotransferase family. Homodimer.

The catalysed reaction is alpha,alpha-trehalose + 3'-phosphoadenylyl sulfate = 2-O-sulfo-alpha,alpha-trehalose + adenosine 3',5'-bisphosphate + H(+). Its pathway is glycolipid metabolism. Functionally, catalyzes the sulfuryl group transfer from 3'-phosphoadenosine-5'-phosphosulfate (PAPS) to trehalose, leading to trehalose-2-sulfate (T2S). The sulfation of trehalose is the first step in the biosynthesis of sulfolipid-1 (SL-1), a major cell wall glycolipid in pathogenic mycobacteria. Cannot use free glucose and unnatural stereoisomers of trehalose (alpha,beta (neo-trehalose) and beta,beta (iso-trehalose)) as substrates. The polypeptide is Trehalose 2-sulfotransferase (Mycolicibacterium smegmatis (strain ATCC 700084 / mc(2)155) (Mycobacterium smegmatis)).